The chain runs to 603 residues: MTDVPVSRIRNFSIIAHIDHGKSTLADRLLQITGTVAQREMKEQFLDNMDLERERGITIKLQAARMDYTAKDGQKYVLNLIDTPGHVDFSYEVSRSLAACEGALLVVDASQGVEAQTLANVYLALENNLEIIPVLNKIDLPSAEPERVAAEIEEVVGLDCSEAIRASAKAGIGINDILESIVQLVPPPQDTLEEPFRALIFDSYYDAYRGVIVYFRVMDGRVKKGDKIRFMASGKEFVIDELGILSPQQVQVNELHAGEVGYLAAAIKTVADARVGDTITLTAKPAQEPLPGYTEAKPMVFCGLFPTDADQYADLKDALEKLKLNDAALSYEPETSSAMGFGFRCGFLGLLHMEIVQERLEREYNLDLITTAPSVVYQVTTTDGEIVEVDNPSLLPSPQKREKIEEPYIQVEMITPETYVGALMELCQSRRGVFKDMRYFTKTRTALIYELPLAEVVTDFFDQLKSRSRGYASMEYQLIGYRENELVKLDIMVNGDPVDALAMIVHRDKAYYVGRALTEKLKELIPRHQFKVPIQAAIGSKIIASEHIPALRKDVLAKCYGGDISRKKKLLDKQAKGKKRMKAIGTVDVPQEAFMAVLKLDPQ.

The tr-type G domain occupies 7–189 (SRIRNFSIIA…SIVQLVPPPQ (183 aa)). Residues 19–24 (DHGKST) and 136–139 (NKID) contribute to the GTP site.

The protein belongs to the TRAFAC class translation factor GTPase superfamily. Classic translation factor GTPase family. LepA subfamily.

The protein resides in the cell inner membrane. It catalyses the reaction GTP + H2O = GDP + phosphate + H(+). In terms of biological role, required for accurate and efficient protein synthesis under certain stress conditions. May act as a fidelity factor of the translation reaction, by catalyzing a one-codon backward translocation of tRNAs on improperly translocated ribosomes. Back-translocation proceeds from a post-translocation (POST) complex to a pre-translocation (PRE) complex, thus giving elongation factor G a second chance to translocate the tRNAs correctly. Binds to ribosomes in a GTP-dependent manner. The sequence is that of Elongation factor 4 from Microcystis aeruginosa (strain NIES-843 / IAM M-2473).